We begin with the raw amino-acid sequence, 142 residues long: Large ribosomal subunit protein uL11 (142 aa).

It belongs to the universal ribosomal protein uL11 family. In terms of assembly, part of the ribosomal stalk of the 50S ribosomal subunit. Interacts with L10 and the large rRNA to form the base of the stalk. L10 forms an elongated spine to which L12 dimers bind in a sequential fashion forming a multimeric L10(L12)X complex. Post-translationally, one or more lysine residues are methylated.

Forms part of the ribosomal stalk which helps the ribosome interact with GTP-bound translation factors. This is Large ribosomal subunit protein uL11 from Maricaulis maris (strain MCS10) (Caulobacter maris).